The sequence spans 547 residues: CTP synthase (547 aa).

Residues 1-265 (MTKFVFVTGG…DRIVCEKLAL (265 aa)) are amidoligase domain. Residue S13 participates in CTP binding. S13 lines the UTP pocket. ATP is bound by residues 14-19 (SLGKGI) and D71. The Mg(2+) site is built by D71 and E139. CTP-binding positions include 146–148 (DIE), 186–191 (KTKPTQ), and K222. UTP is bound by residues 186–191 (KTKPTQ) and K222. Residues 290-542 (TIGMVGKYVD…IKAALAHKHA (253 aa)) form the Glutamine amidotransferase type-1 domain. G351 contributes to the L-glutamine binding site. C378 serves as the catalytic Nucleophile; for glutamine hydrolysis. L-glutamine-binding positions include 379-382 (LGMQ), E402, and R468. Catalysis depends on residues H515 and E517.

Belongs to the CTP synthase family. As to quaternary structure, homotetramer.

It carries out the reaction UTP + L-glutamine + ATP + H2O = CTP + L-glutamate + ADP + phosphate + 2 H(+). It catalyses the reaction L-glutamine + H2O = L-glutamate + NH4(+). The enzyme catalyses UTP + NH4(+) + ATP = CTP + ADP + phosphate + 2 H(+). It functions in the pathway pyrimidine metabolism; CTP biosynthesis via de novo pathway; CTP from UDP: step 2/2. Allosterically activated by GTP, when glutamine is the substrate; GTP has no effect on the reaction when ammonia is the substrate. The allosteric effector GTP functions by stabilizing the protein conformation that binds the tetrahedral intermediate(s) formed during glutamine hydrolysis. Inhibited by the product CTP, via allosteric rather than competitive inhibition. Catalyzes the ATP-dependent amination of UTP to CTP with either L-glutamine or ammonia as the source of nitrogen. Regulates intracellular CTP levels through interactions with the four ribonucleotide triphosphates. The sequence is that of CTP synthase from Janthinobacterium sp. (strain Marseille) (Minibacterium massiliensis).